Consider the following 70-residue polypeptide: Large ribosomal subunit protein bL31 (70 aa).

Zn(2+)-binding residues include C16, C18, C37, and C40.

This sequence belongs to the bacterial ribosomal protein bL31 family. Type A subfamily. In terms of assembly, part of the 50S ribosomal subunit. The cofactor is Zn(2+).

Binds the 23S rRNA. In Shewanella sp. (strain MR-4), this protein is Large ribosomal subunit protein bL31.